The primary structure comprises 61 residues: Metallothionein-1 (61 aa).

Met1 carries the N-acetylmethionine modification. The beta stretch occupies residues 1 to 29 (MDPNCSCSTGGSCTCTSSCACKNCKCTSC). Residues Cys5, Cys7, Cys13, Cys15, Cys19, Cys21, Cys24, Cys26, Cys29, Cys33, Cys34, Cys36, Cys37, Cys41, Cys44, Cys48, Cys50, Cys57, Cys59, and Cys60 each contribute to the a divalent metal cation site. The interval 30–61 (KKSCCSCCPVGCSKCAQGCVCKGAADKCTCCA) is alpha.

Belongs to the metallothionein superfamily. Type 1 family.

Its function is as follows. Metallothioneins have a high content of cysteine residues that bind various heavy metals; these proteins are transcriptionally regulated by both heavy metals and glucocorticoids. The protein is Metallothionein-1 (Mt1) of Mus musculus (Mouse).